Reading from the N-terminus, the 233-residue chain is Glycerol-3-phosphate acyltransferase 5 (233 aa).

Transmembrane regions (helical) follow at residues 3–23, 69–89, 116–136, 143–163, and 168–188; these read LVFI…MAYL, MILL…VGLF, LVMA…FGLF, VFLG…FFGI, and TISW…LMAP.

Belongs to the PlsY family. Probably interacts with PlsX.

Its subcellular location is the cell membrane. It carries out the reaction an acyl phosphate + sn-glycerol 3-phosphate = a 1-acyl-sn-glycero-3-phosphate + phosphate. Its pathway is lipid metabolism; phospholipid metabolism. Its function is as follows. Catalyzes the transfer of an acyl group from acyl-phosphate (acyl-PO(4)) to glycerol-3-phosphate (G3P) to form lysophosphatidic acid (LPA). This enzyme utilizes acyl-phosphate as fatty acyl donor, but not acyl-CoA or acyl-ACP. This Dehalococcoides mccartyi (strain ATCC BAA-2266 / KCTC 15142 / 195) (Dehalococcoides ethenogenes (strain 195)) protein is Glycerol-3-phosphate acyltransferase 5.